We begin with the raw amino-acid sequence, 553 residues long: Phospholipase B (553 aa).

Positions 1–35 are cleaved as a signal peptide; sequence MIRFGNPSSSDKRRQRCRSWYWGGLLLLWAVAETR. Asn-313, Asn-416, and Asn-531 each carry an N-linked (GlcNAc...) asparagine glycan.

Belongs to the phospholipase B-like family. In terms of tissue distribution, expressed by the venom gland.

It is found in the secreted. May cause hemolysis or may be involved in protein folding and translation. The sequence is that of Phospholipase B from Crotalus adamanteus (Eastern diamondback rattlesnake).